A 165-amino-acid chain; its full sequence is 5-formyltetrahydrofolate cyclo-ligase (165 aa).

ATP is bound at residue 4–8; the sequence is KNSLR. Substrate contacts are provided by Ile-51 and Glu-56. 116–124 is a binding site for ATP; sequence RIGFGKGYY. Asp-125 provides a ligand contact to Mg(2+). ATP is bound by residues Arg-126 and Trp-154. Position 155 (Asp-155) interacts with Mg(2+).

Belongs to the 5-formyltetrahydrofolate cyclo-ligase family. As to quaternary structure, monomer or homodimer. Mg(2+) serves as cofactor.

The protein resides in the cytoplasm. It carries out the reaction (6S)-5-formyl-5,6,7,8-tetrahydrofolate + ATP = (6R)-5,10-methenyltetrahydrofolate + ADP + phosphate. Functionally, involved in folate metabolism. Catalyzes the irreversible conversion of 5-formyltetrahydrofolate (5-FTHF) to yield 5,10-methenyltetrahydrofolate. This Mycoplasma genitalium (strain ATCC 33530 / DSM 19775 / NCTC 10195 / G37) (Mycoplasmoides genitalium) protein is 5-formyltetrahydrofolate cyclo-ligase.